The following is a 366-amino-acid chain: C-X-C chemokine receptor type 3 (366 aa).

Residues 1 to 55 (MVPEMSERQEFQASEFAYLLENSSYDYGENETYFCCTSPPCPQDFSLNFDRTFLP) are Extracellular-facing. Residue Asn-22 is glycosylated (N-linked (GlcNAc...) asparagine). Tyr-25 and Tyr-27 each carry sulfotyrosine. Asn-30 is a glycosylation site (N-linked (GlcNAc...) asparagine). The chain crosses the membrane as a helical span at residues 56-76 (VLYSLLFVLGLLGNGVVAVVL). Residues 77 to 88 (LSQRAALSSTDT) are Cytoplasmic-facing. The helical transmembrane segment at 89–109 (FLLHLAVADALLVLTLPLWAV) threads the bilayer. The Extracellular portion of the chain corresponds to 110-124 (DAAIQWVFGSGLCKV). Cysteines 122 and 201 form a disulfide. The helical transmembrane segment at 125–145 (AGALFNINFYAGALLLACISF) threads the bilayer. Residues 146-167 (DRYLSIVHATQFYRRGPPARVA) are Cytoplasmic-facing. Residues 168 to 188 (LTCVAVWGLCLLFALPDFIFL) traverse the membrane as a helical segment. Residues 189–221 (SSHHDNRLNATHCQYNFPQEGRTALRVLQLVAG) are Extracellular-facing. A glycan (N-linked (GlcNAc...) asparagine) is linked at Asn-197. Residues 222–242 (FLLPLLVMAYCYARILTVLLV) form a helical membrane-spanning segment. Topologically, residues 243–254 (SRGQRRLRAMRL) are cytoplasmic. A helical membrane pass occupies residues 255–275 (VVVVVVAFALCWTPYHLVVLV). Over 276-299 (DTLMDLGALARNCGRESRVDVAKS) the chain is Extracellular. A helical transmembrane segment spans residues 300–320 (VTSGMGYMHCCLNPLLYAFVG). The Cytoplasmic segment spans residues 321–366 (VKFRERMWVLLMRLGCPDQRGHQRQPSASRRDSSWSETTEASYSGL). The interval 339 to 366 (QRGHQRQPSASRRDSSWSETTEASYSGL) is disordered. Residues 355 to 366 (WSETTEASYSGL) show a composition bias toward polar residues.

It belongs to the G-protein coupled receptor 1 family. As to quaternary structure, homomer. Forms heteromers with ACKR4. Interacts with PF4/CXCL4. Sulfation on Tyr-25 and Tyr-27 is essential for CXCL10 binding. Post-translationally, N-glycosylated.

It localises to the cell membrane. Its function is as follows. Receptor for the C-X-C chemokine CXCL9, CXCL10 and CXCL11 and mediates the proliferation, survival and angiogenic activity of mesangial cells through a heterotrimeric G-protein signaling pathway. Probably promotes cell chemotaxis response. Binds to CCL21. Upon activation by PF4, induces activated T-lymphocytes migration mediated via downstream Ras/extracellular signal-regulated kinase (ERK) signaling. The sequence is that of C-X-C chemokine receptor type 3 (CXCR3) from Capra hircus (Goat).